A 52-amino-acid chain; its full sequence is uncharacterized protein (52 aa).

This is an uncharacterized protein from Haemophilus influenzae (strain ATCC 51907 / DSM 11121 / KW20 / Rd).